Reading from the N-terminus, the 868-residue chain is Leucine--tRNA ligase (868 aa).

A 'HIGH' region motif is present at residues Pro-42 to His-52. The 'KMSKS' region signature appears at Lys-627–Ser-631. Residue Lys-630 participates in ATP binding.

It belongs to the class-I aminoacyl-tRNA synthetase family.

It is found in the cytoplasm. The enzyme catalyses tRNA(Leu) + L-leucine + ATP = L-leucyl-tRNA(Leu) + AMP + diphosphate. The chain is Leucine--tRNA ligase from Pseudomonas fluorescens (strain ATCC BAA-477 / NRRL B-23932 / Pf-5).